A 604-amino-acid chain; its full sequence is NADPH oxidase activator (604 aa).

TPR repeat units follow at residues 36 to 69 (SKINYNIGVMYIKSNNFRNAIEYFNRSVEQDKYL) and 71 to 103 (SSYYMRAIAHHMNGELNHAIVDYDETISKLRGH). Disordered stretches follow at residues 180–298 (FKPP…KLPS) and 383–581 (DIIP…PYQV). Composition is skewed to low complexity over residues 194–215 (SATTSSIQSSSPSTPMSSSPPS) and 225–243 (PSSSSPSSSSPSLSSSSSP). Over residues 244–260 (KLPPTPKPSFGSSPPPS) the composition is skewed to pro residues. The segment covering 261–284 (SSSSSSSSSSSSSSSISPLTNKTL) has biased composition (low complexity). Residues 309–384 (KITLKVFYKD…EINEINVKDI (76 aa)) enclose the PB1 domain. Low complexity-rich tracts occupy residues 396-424 (PDKTNNSTSSYSSSSSSSSSSSSSSSSSS), 435-453 (PKTTTRPILPPTTTTTTST), and 467-483 (FGSTPSSPSFSSPSSSS). The segment covering 502 to 528 (LLKQQNQTQSINIPPKVPTSSRPKMTQ) has biased composition (polar residues). A compositionally biased stretch (low complexity) spans 529 to 570 (SHSPPSSSPLSSYSTSFQSVSSPSLSSSYNGSTSSYGGFSSS). The WW domain occupies 573 to 604 (PPTPYPYQVLYTDSNEKYYLNTETNETFWELP).

Functionally, may function as an activator of NOX1, a superoxide-producing NADPH oxidase. The chain is NADPH oxidase activator (ncfA) from Dictyostelium discoideum (Social amoeba).